Consider the following 1176-residue polypeptide: Serine/threonine-protein kinase pakF (1176 aa).

2 stretches are compositionally biased toward low complexity: residues 1-19 and 32-52; these read MSNLKLSNNNNGNQKESSS and NLLNSFSSNNSNNNLSNSGSN. Disordered regions lie at residues 1 to 231 and 254 to 361; these read MSNL…HESR and LPST…KKTK. The segment covering 64 to 76 has biased composition (pro residues); it reads QLPPNYTPPPPPH. Residues 92 to 133 are a coiled coil; the sequence is LNNENSDNNNNNNNNNNNNNNNNNNNNNNNNNNNEQLARTES. Low complexity-rich tracts occupy residues 93 to 125, 133 to 148, and 156 to 172; these read NNENSDNNNNNNNNNNNNNNNNNNNNNNNNNNN, SSVSIISSSSSGSNSG, and SSNISTDDSNTTTETYS. A compositionally biased stretch (polar residues) spans 173-197; the sequence is MSPNQTLNSNIDSSEQQHQDLSSSV. Residues 198 to 226 are compositionally biased toward low complexity; it reads NNNNNNNNNNNNNNNNNNNNNNNNNNNNN. Over residues 254-289 the composition is skewed to polar residues; the sequence is LPSTPTQQNVEIQTTNGGSSETSPNGLISPRPSNDQ. Residues 316-353 are compositionally biased toward low complexity; sequence SLSSSTTTPSTTSSLTSSPSSSSLAISSPNTTAATTTN. The region spanning 370–383 is the CRIB domain; the sequence is ISVPYNVIHKMHVD. In terms of domain architecture, Protein kinase spans 394–646; sequence FILDEKLGDG…PIDLLCHPFL (253 aa). ATP is bound by residues 400-408 and Lys423; that span reads LGDGAYGSV. Asp514 serves as the catalytic Proton acceptor. 4 disordered regions span residues 670–723, 753–885, 968–1083, and 1112–1176; these read IDDL…SDEL, QEEE…GNNL, HTTS…TGRA, and NSNS…NIKK. Composition is skewed to low complexity over residues 682 to 693 and 710 to 720; these read SQSSSSSSPQSP and SIISPIPSSPS. Acidic residues-rich tracts occupy residues 767–789 and 813–844; these read DEQDDEQDDEDDDDENEDDEDVD and DQDDEEEDEEEDDEEEEEEEEDDDEINEDEEI. Positions 812–873 form a coiled coil; it reads SDQDDEEEDE…NKKKNKKNNL (62 aa). The span at 852-870 shows a compositional bias: basic residues; sequence VRKKKNKSTKKSNKKKNKK. 2 stretches are compositionally biased toward polar residues: residues 873–884 and 968–985; these read LSTIGKSGSGNN and HTTSQPKQMQSKLSATNL. Composition is skewed to low complexity over residues 991–1044, 1051–1066, and 1148–1176; these read SSSP…RPNS, NNSSTTTTTNSNSSSS, and SSGSGSNSPSLSTNSSSTNSNNSVTNIKK.

The protein belongs to the protein kinase superfamily. STE Ser/Thr protein kinase family. STE20 subfamily. Requires Mg(2+) as cofactor.

The enzyme catalyses L-seryl-[protein] + ATP = O-phospho-L-seryl-[protein] + ADP + H(+). The catalysed reaction is L-threonyl-[protein] + ATP = O-phospho-L-threonyl-[protein] + ADP + H(+). The sequence is that of Serine/threonine-protein kinase pakF from Dictyostelium discoideum (Social amoeba).